The chain runs to 162 residues: Epoxidase pydX (162 aa).

The N-terminal stretch at 1 to 26 (MSLIALPLRLLRLLPAITSTWVLAFA) is a signal peptide. 2 helical membrane passes run 62–82 (WILIVVYPINYALGVVNLFVG) and 89–109 (TGAMSWYTIGLLFSLAHMGYM). 2 N-linked (GlcNAc...) asparagine glycosylation sites follow: N127 and N139.

Belongs to the epoxidase xenD family.

The protein resides in the membrane. It participates in mycotoxin biosynthesis. Epoxidase; part of the gene cluster that mediates the biosynthesis of pyrrocidines, fungal natural products containing a macrocyclic para-cyclophane connected to a decahydrofluorene ring system that show potent antibiotic activities toward Gram-negative bacteria. Within the pathway, pydX functions synergistically with pydB, pydE and pydZ to form the cyclophane. The pathway begins with the PKS-NRPS pydA which, with the help of the trans-enoyl reductase pydC, synthesizes the polyketide-tyrosyl acyl thioester product which can be reductively off-loaded by the terminal reductase (R) domain in pydA. The alpha/beta hydrolase pydG is then required to catalyze the subsequent Knoevenagel condensation that affords the 3-pyrrolin-2-one ring, whereas the four proteins pydB, pydE, pydX and pydZ then function synergistically to form the cyclophane. PydB and the membrane-bound pydX and pydZ are lipid-binding proteins that can sequester and mold the pdyG product into the inverse S-shape. Binding of the medium chain reductase pydE to the complex would trigger the cascade oxidative cyclization. PydY is involved in the Diels-Alder cycloaddition that forms the decahydrofluorene core. Additional non-enzymatic hydroxylation yields pyrrocidine A2 which can be further reduced into pyrrocidine B by an endogenous reductase. The chain is Epoxidase pydX from Acremonium sp.